An 87-amino-acid chain; its full sequence is UPF0335 protein Meso_3367 (87 aa).

This sequence belongs to the UPF0335 family.

This Chelativorans sp. (strain BNC1) protein is UPF0335 protein Meso_3367.